The chain runs to 526 residues: Probable DNA ligase (526 aa).

E228 lines the ATP pocket. K230 functions as the N6-AMP-lysine intermediate in the catalytic mechanism. Residues R235, R250, E279, F319, R391, and K397 each coordinate ATP.

The protein belongs to the ATP-dependent DNA ligase family. Requires Mg(2+) as cofactor.

The catalysed reaction is ATP + (deoxyribonucleotide)n-3'-hydroxyl + 5'-phospho-(deoxyribonucleotide)m = (deoxyribonucleotide)n+m + AMP + diphosphate.. In terms of biological role, DNA ligase that seals nicks in double-stranded DNA during DNA replication, DNA recombination and DNA repair. This chain is Probable DNA ligase, found in Mycobacterium avium (strain 104).